We begin with the raw amino-acid sequence, 91 residues long: Large ribosomal subunit protein eL37 (91 aa).

Zn(2+)-binding residues include cysteine 19, cysteine 22, cysteine 34, and cysteine 37. The C4-type zinc-finger motif lies at 19–37 (CRRCGKSSFHIQKKTCASC).

Belongs to the eukaryotic ribosomal protein eL37 family. The cofactor is Zn(2+).

In terms of biological role, binds to the 23S rRNA. This Dictyostelium discoideum (Social amoeba) protein is Large ribosomal subunit protein eL37 (rpl37).